Here is a 201-residue protein sequence, read N- to C-terminus: Imidazole glycerol phosphate synthase subunit HisH (201 aa).

Residues 1–201 (MIIVIDYDAG…ILKKFVDLCD (201 aa)) form the Glutamine amidotransferase type-1 domain. The active-site Nucleophile is the cysteine 79. Catalysis depends on residues histidine 181 and glutamate 183.

In terms of assembly, heterodimer of HisH and HisF.

The protein localises to the cytoplasm. The enzyme catalyses 5-[(5-phospho-1-deoxy-D-ribulos-1-ylimino)methylamino]-1-(5-phospho-beta-D-ribosyl)imidazole-4-carboxamide + L-glutamine = D-erythro-1-(imidazol-4-yl)glycerol 3-phosphate + 5-amino-1-(5-phospho-beta-D-ribosyl)imidazole-4-carboxamide + L-glutamate + H(+). It catalyses the reaction L-glutamine + H2O = L-glutamate + NH4(+). It participates in amino-acid biosynthesis; L-histidine biosynthesis; L-histidine from 5-phospho-alpha-D-ribose 1-diphosphate: step 5/9. In terms of biological role, IGPS catalyzes the conversion of PRFAR and glutamine to IGP, AICAR and glutamate. The HisH subunit catalyzes the hydrolysis of glutamine to glutamate and ammonia as part of the synthesis of IGP and AICAR. The resulting ammonia molecule is channeled to the active site of HisF. In Streptococcus mutans serotype c (strain ATCC 700610 / UA159), this protein is Imidazole glycerol phosphate synthase subunit HisH.